The primary structure comprises 95 residues: Large ribosomal subunit protein bL25 (95 aa).

Positions 1-20 are disordered; it reads MSFKFNAEVRSKQGKGASRR.

Belongs to the bacterial ribosomal protein bL25 family. Part of the 50S ribosomal subunit; part of the 5S rRNA/L5/L18/L25 subcomplex. Contacts the 5S rRNA. Binds to the 5S rRNA independently of L5 and L18.

This is one of the proteins that binds to the 5S RNA in the ribosome where it forms part of the central protuberance. The sequence is that of Large ribosomal subunit protein bL25 from Histophilus somni (strain 129Pt) (Haemophilus somnus).